The chain runs to 147 residues: Large ribosomal subunit protein uL13 (147 aa).

Belongs to the universal ribosomal protein uL13 family. As to quaternary structure, part of the 50S ribosomal subunit.

In terms of biological role, this protein is one of the early assembly proteins of the 50S ribosomal subunit, although it is not seen to bind rRNA by itself. It is important during the early stages of 50S assembly. This is Large ribosomal subunit protein uL13 from Nocardioides sp. (strain ATCC BAA-499 / JS614).